A 210-amino-acid polypeptide reads, in one-letter code: MVALTRRQREMYDFLCSFTDSHGYSPSFEEIAEGMGLSSLATVHKHIGNLESKGLLKRDYNRARSIEVLRPKGQLKKSMAAAAAVATAGLPFLGRIAAGQPIEAIENPETISLGDFTGSKEVFVLQVSGESMQDEHIVDGDYVLVERINTARDGEIVVALVENSDTTLKRIYREGETVRLQPSNAKMQPIRVPAGSVQVQGRVIGVLRKY.

A DNA-binding region (H-T-H motif) is located at residues 28 to 48 (FEEIAEGMGLSSLATVHKHIG). Catalysis depends on for autocatalytic cleavage activity residues Ser131 and Lys169.

Belongs to the peptidase S24 family. As to quaternary structure, homodimer.

The enzyme catalyses Hydrolysis of Ala-|-Gly bond in repressor LexA.. Represses a number of genes involved in the response to DNA damage (SOS response), including recA and lexA. In the presence of single-stranded DNA, RecA interacts with LexA causing an autocatalytic cleavage which disrupts the DNA-binding part of LexA, leading to derepression of the SOS regulon and eventually DNA repair. This is LexA repressor from Koribacter versatilis (strain Ellin345).